The sequence spans 375 residues: tRNA/tmRNA (uracil-C(5))-methyltransferase (375 aa).

The S-adenosyl-L-methionine site is built by Gln197, Tyr225, Asn230, Glu246, and Asp306. Cys331 functions as the Nucleophile in the catalytic mechanism. Glu365 serves as the catalytic Proton acceptor.

The protein belongs to the class I-like SAM-binding methyltransferase superfamily. RNA M5U methyltransferase family. TrmA subfamily.

It carries out the reaction uridine(54) in tRNA + S-adenosyl-L-methionine = 5-methyluridine(54) in tRNA + S-adenosyl-L-homocysteine + H(+). The catalysed reaction is uridine(341) in tmRNA + S-adenosyl-L-methionine = 5-methyluridine(341) in tmRNA + S-adenosyl-L-homocysteine + H(+). Its function is as follows. Dual-specificity methyltransferase that catalyzes the formation of 5-methyluridine at position 54 (m5U54) in all tRNAs, and that of position 341 (m5U341) in tmRNA (transfer-mRNA). This is tRNA/tmRNA (uracil-C(5))-methyltransferase from Aliarcobacter butzleri (strain RM4018) (Arcobacter butzleri).